Reading from the N-terminus, the 166-residue chain is Putative transmembrane protein ORF166 (166 aa).

Helical transmembrane passes span 35–55 (IILVFLITMPVRFFICIFAGL), 60–80 (PICVLINLLPPLAIAIPFVTA), and 124–144 (IFCLVGIIIADVLNPILAFIN).

It is found in the host membrane. This chain is Putative transmembrane protein ORF166, found in Acidianus convivator (ABV).